The primary structure comprises 232 residues: Acyl-protein thioesterase 1 (232 aa).

Residues S125, D179, and H212 each act as charge relay system in the active site.

Belongs to the AB hydrolase superfamily. AB hydrolase 2 family.

It localises to the cytoplasm. The protein resides in the nucleus. The catalysed reaction is S-hexadecanoyl-L-cysteinyl-[protein] + H2O = L-cysteinyl-[protein] + hexadecanoate + H(+). Its function is as follows. Hydrolyzes fatty acids from S-acylated cysteine residues in proteins with a strong preference for palmitoylated G-alpha proteins over other acyl substrates. Mediates the deacylation of G-alpha proteins such as GPA1 in vivo, but has weak or no activity toward palmitoylated Ras proteins. Has weak lysophospholipase activity in vitro; however such activity may not exist in vivo. The protein is Acyl-protein thioesterase 1 of Debaryomyces hansenii (strain ATCC 36239 / CBS 767 / BCRC 21394 / JCM 1990 / NBRC 0083 / IGC 2968) (Yeast).